A 4544-amino-acid polypeptide reads, in one-letter code: MLTPPLLLLLPLLSALVAAAIDAPKTCSPKQFACRDQITCISKGWRCDGERDCPDGSDEAPEICPQSKAQRCQPNEHNCLGTELCVPMSRLCNGVQDCMDGSDEGPHCRELQGNCSRLGCQHHCVPTLDGPTCYCNSSFQLQADGKTCKDFDECSVYGTCSQLCTNTDGSFICGCVEGYLLQPDNRSCKAKNEPVDRPPVLLIANSQNILATYLSGAQVSTITPTSTRQTTAMDFSYANETVCWVHVGDSAAQTQLKCARMPGLKGFVDEHTINISLSLHHVEQMAIDWLTGNFYFVDDIDDRIFVCNRNGDTCVTLLDLELYNPKGIALDPAMGKVFFTDYGQIPKVERCDMDGQNRTKLVDSKIVFPHGITLDLVSRLVYWADAYLDYIEVVDYEGKGRQTIIQGILIEHLYGLTVFENYLYATNSDNANAQQKTSVIRVNRFNSTEYQVVTRVDKGGALHIYHQRRQPRVRSHACENDQYGKPGGCSDICLLANSHKARTCRCRSGFSLGSDGKSCKKPEHELFLVYGKGRPGIIRGMDMGAKVPDEHMIPIENLMNPRALDFHAETGFIYFADTTSYLIGRQKIDGTERETILKDGIHNVEGVAVDWMGDNLYWTDDGPKKTISVARLEKAAQTRKTLIEGKMTHPRAIVVDPLNGWMYWTDWEEDPKDSRRGRLERAWMDGSHRDIFVTSKTVLWPNGLSLDIPAGRLYWVDAFYDRIETILLNGTDRKIVYEGPELNHAFGLCHHGNYLFWTEYRSGSVYRLERGVGGAPPTVTLLRSERPPIFEIRMYDAQQQQVGTNKCRVNNGGCSSLCLATPGSRQCACAEDQVLDADGVTCLANPSYVPPPQCQPGEFACANSRCIQERWKCDGDNDCLDNSDEAPALCHQHTCPSDRFKCENNRCIPNRWLCDGDNDCGNSEDESNATCSARTCPPNQFSCASGRCIPISWTCDLDDDCGDRSDESASCAYPTCFPLTQFTCNNGRCININWRCDNDNDCGDNSDEAGCSHSCSSTQFKCNSGRCIPEHWTCDGDNDCGDYSDETHANCTNQATRPPGGCHTDEFQCRLDGLCIPLRWRCDGDTDCMDSSDEKSCEGVTHVCDPSVKFGCKDSARCISKAWVCDGDNDCEDNSDEENCESLACRPPSHPCANNTSVCLPPDKLCDGNDDCGDGSDEGELCDQCSLNNGGCSHNCSVAPGEGIVCSCPLGMELGPDNHTCQIQSYCAKHLKCSQKCDQNKFSVKCSCYEGWVLEPDGESCRSLDPFKPFIIFSNRHEIRRIDLHKGDYSVLVPGLRNTIALDFHLSQSALYWTDVVEDKIYRGKLLDNGALTSFEVVIQYGLATPEGLAVDWIAGNIYWVESNLDQIEVAKLDGTLRTTLLAGDIEHPRAIALDPRDGILFWTDWDASLPRIEAASMSGAGRRTVHRETGSGGWPNGLTVDYLEKRILWIDARSDAIYSARYDGSGHMEVLRGHEFLSHPFAVTLYGGEVYWTDWRTNTLAKANKWTGHNVTVVQRTNTQPFDLQVYHPSRQPMAPNPCEANGGQGPCSHLCLINYNRTVSCACPHLMKLHKDNTTCYEFKKFLLYARQMEIRGVDLDAPYYNYIISFTVPDIDNVTVLDYDAREQRVYWSDVRTQAIKRAFINGTGVETVVSADLPNAHGLAVDWVSRNLFWTSYDTNKKQINVARLDGSFKNAVVQGLEQPHGLVVHPLRGKLYWTDGDNISMANMDGSNRTLLFSGQKGPVGLAIDFPESKLYWISSGNHTINRCNLDGSGLEVIDAMRSQLGKATALAIMGDKLWWADQVSEKMGTCSKADGSGSVVLRNSTTLVMHMKVYDESIQLDHKGTNPCSVNNGDCSQLCLPTSETTRSCMCTAGYSLRSGQQACEGVGSFLLYSVHEGIRGIPLDPNDKSDALVPVSGTSLAVGIDFHAENDTIYWVDMGLSTISRAKRDQTWREDVVTNGIGRVEGIAVDWIAGNIYWTDQGFDVIEVARLNGSFRYVVISQGLDKPRAITVHPEKGYLFWTEWGQYPRIERSRLDGTERVVLVNVSISWPNGISVDYQDGKLYWCDARTDKIERIDLETGENREVVLSSNNMDMFSVSVFEDFIYWSDRTHANGSIKRGSKDNATDSVPLRTGIGVQLKDIKVFNRDRQKGTNVCAVANGGCQQLCLYRGRGQRACACAHGMLAEDGASCREYAGYLLYSERTILKSIHLSDERNLNAPVQPFEDPEHMKNVIALAFDYRAGTSPGTPNRIFFSDIHFGNIQQINDDGSRRITIVENVGSVEGLAYHRGWDTLYWTSYTTSTITRHTVDQTRPGAFERETVITMSGDDHPRAFVLDECQNLMFWTNWNEQHPSIMRAALSGANVLTLIEKDIRTPNGLAIDHRAEKLYFSDATLDKIERCEYDGSHRYVILKSEPVHPFGLAVYGEHIFWTDWVRRAVQRANKHVGSNMKLLRVDIPQQPMGIIAVANDTNSCELSPCRINNGGCQDLCLLTHQGHVNCSCRGGRILQDDLTCRAVNSSCRAQDEFECANGECINFSLTCDGVPHCKDKSDEKPSYCNSRRCKKTFRQCSNGRCVSNMLWCNGADDCGDGSDEIPCNKTACGVGEFRCRDGTCIGNSSRCNQFVDCEDASDEMNCSATDCSSYFRLGVKGVLFQPCERTSLCYAPSWVCDGANDCGDYSDERDCPGVKRPRCPLNYFACPSGRCIPMSWTCDKEDDCEHGEDETHCNKFCSEAQFECQNHRCISKQWLCDGSDDCGDGSDEAAHCEGKTCGPSSFSCPGTHVCVPERWLCDGDKDCADGADESIAAGCLYNSTCDDREFMCQNRQCIPKHFVCDHDRDCADGSDESPECEYPTCGPSEFRCANGRCLSSRQWECDGENDCHDQSDEAPKNPHCTSQEHKCNASSQFLCSSGRCVAEALLCNGQDDCGDSSDERGCHINECLSRKLSGCSQDCEDLKIGFKCRCRPGFRLKDDGRTCADVDECSTTFPCSQRCINTHGSYKCLCVEGYAPRGGDPHSCKAVTDEEPFLIFANRYYLRKLNLDGSNYTLLKQGLNNAVALDFDYREQMIYWTDVTTQGSMIRRMHLNGSNVQVLHRTGLSNPDGLAVDWVGGNLYWCDKGRDTIEVSKLNGAYRTVLVSSGLREPRALVVDVQNGYLYWTDWGDHSLIGRIGMDGSSRSVIVDTKITWPNGLTLDYVTERIYWADAREDYIEFASLDGSNRHVVLSQDIPHIFALTLFEDYVYWTDWETKSINRAHKTTGTNKTLLISTLHRPMDLHVFHALRQPDVPNHPCKVNNGGCSNLCLLSPGGGHKCACPTNFYLGSDGRTCVSNCTASQFVCKNDKCIPFWWKCDTEDDCGDHSDEPPDCPEFKCRPGQFQCSTGICTNPAFICDGDNDCQDNSDEANCDIHVCLPSQFKCTNTNRCIPGIFRCNGQDNCGDGEDERDCPEVTCAPNQFQCSITKRCIPRVWVCDRDNDCVDGSDEPANCTQMTCGVDEFRCKDSGRCIPARWKCDGEDDCGDGSDEPKEECDERTCEPYQFRCKNNRCVPGRWQCDYDNDCGDNSDEESCTPRPCSESEFSCANGRCIAGRWKCDGDHDCADGSDEKDCTPRCDMDQFQCKSGHCIPLRWRCDADADCMDGSDEEACGTGVRTCPLDEFQCNNTLCKPLAWKCDGEDDCGDNSDENPEECARFVCPPNRPFRCKNDRVCLWIGRQCDGTDNCGDGTDEEDCEPPTAHTTHCKDKKEFLCRNQRCLSSSLRCNMFDDCGDGSDEEDCSIDPKLTSCATNASICGDEARCVRTEKAAYCACRSGFHTVPGQPGCQDINECLRFGTCSQLCNNTKGGHLCSCARNFMKTHNTCKAEGSEYQVLYIADDNEIRSLFPGHPHSAYEQAFQGDESVRIDAMDVHVKAGRVYWTNWHTGTISYRSLPPAAPPTTSNRHRRQIDRGVTHLNISGLKMPRGIAIDWVAGNVYWTDSGRDVIEVAQMKGENRKTLISGMIDEPHAIVVDPLRGTMYWSDWGNHPKIETAAMDGTLRETLVQDNIQWPTGLAVDYHNERLYWADAKLSVIGSIRLNGTDPIVAADSKRGLSHPFSIDVFEDYIYGVTYINNRVFKIHKFGHSPLVNLTGGLSHASDVVLYHQHKQPEVTNPCDRKKCEWLCLLSPSGPVCTCPNGKRLDNGTCVPVPSPTPPPDAPRPGTCNLQCFNGGSCFLNARRQPKCRCQPRYTGDKCELDQCWEHCRNGGTCAASPSGMPTCRCPTGFTGPKCTQQVCAGYCANNSTCTVNQGNQPQCRCLPGFLGDRCQYRQCSGYCENFGTCQMAADGSRQCRCTAYFEGSRCEVNKCSRCLEGACVVNKQSGDVTCNCTDGRVAPSCLTCVGHCSNGGSCTMNSKMMPECQCPPHMTGPRCEEHVFSQQQPGHIASILIPLLLLLLLVLVAGVVFWYKRRVQGAKGFQHQRMTNGAMNVEIGNPTYKMYEGGEPDDVGGLLDADFALDPDKPTNFTNPVYATLYMGGHGSRHSLASTDEKRELLGRGPEDEIGDPLA.

A signal peptide spans 1-19; sequence MLTPPLLLLLPLLSALVAA. Over 20–4419 the chain is Extracellular; it reads AIDAPKTCSP…EHVFSQQQPG (4400 aa). LDL-receptor class A domains are found at residues 25–66 and 70–110; these read KTCS…ICPQ and QRCQ…HCRE. 6 cysteine pairs are disulfide-bonded: C27/C40, C34/C53, C47/C64, C72/C85, C79/C98, and C92/C108. In terms of domain architecture, EGF-like 1 spans 111–149; the sequence is LQGNCSRLGCQHHCVPTLDGPTCYCNSSFQLQADGKTCK. N-linked (GlcNAc...) asparagine glycosylation occurs at N114. 6 disulfide bridges follow: C115–C124, C120–C133, C135–C148, C154–C164, C160–C173, and C175–C188. An N-linked (GlcNAc...) asparagine glycan is attached at N136. One can recognise an EGF-like 2; calcium-binding domain in the interval 150–189; sequence DFDECSVYGTCSQLCTNTDGSFICGCVEGYLLQPDNRSCK. 3 N-linked (GlcNAc...) asparagine glycosylation sites follow: N185, N239, and N274. LDL-receptor class B repeat units lie at residues 292-334, 335-378, and 379-422; these read GNFY…DPAM, GKVF…DLVS, and RLVY…FENY. An N-linked (GlcNAc...) asparagine glycan is attached at N357. N446 carries N-linked (GlcNAc...) asparagine glycosylation. In terms of domain architecture, EGF-like 3 spans 474–520; it reads RSHACENDQYGKPGGCSDICLLANSHKARTCRCRSGFSLGSDGKSCK. Intrachain disulfides connect C478/C493, C489/C504, and C506/C519. LDL-receptor class B repeat units lie at residues 571–613, 614–659, 660–710, and 711–754; these read GFIY…DWMG, DNLY…DPLN, GWMY…DIPA, and GRLY…HGNY. N729 carries N-linked (GlcNAc...) (complex) asparagine glycosylation. Residues 803–843 form the EGF-like 4 domain; the sequence is GTNKCRVNNGGCSSLCLATPGSRQCACAEDQVLDADGVTCL. Intrachain disulfides connect C807–C818, C814–C827, C829–C842, C854–C866, C861–C879, C873–C890, C895–C907, C902–C920, C914–C931, C936–C948, C943–C961, C955–C971, C976–C989, C984–C1002, C996–C1011, C1015–C1027, C1022–C1040, C1034–C1051, C1062–C1075, C1069–C1088, C1082–C1097, C1104–C1118, C1112–C1131, C1125–C1140, C1145–C1159, C1152–C1172, C1166–C1182, C1185–C1196, C1192–C1206, C1208–C1221, C1227–C1237, C1233–C1246, and C1248–C1261. LDL-receptor class A domains follow at residues 852–892, 893–933, 934–973, 974–1013, 1013–1053, 1060–1099, 1102–1142, and 1143–1182; these read PQCQ…LCHQ, HTCP…TCSA, RTCP…SCAY, PTCF…GCSH, HSCS…NCTN, GGCH…SCEG, HVCD…NCES, and LACR…GELC. Ca(2+) contacts are provided by W871, D874, D876, D878, D884, and E885. Residue N928 is glycosylated (N-linked (GlcNAc...) asparagine). Ca(2+) is bound by residues W1032, D1035, D1037, D1039, D1045, and E1046. N-linked (GlcNAc...) asparagine glycosylation is present at N1050. W1080, D1083, D1085, D1087, D1093, and E1094 together coordinate Ca(2+). N-linked (GlcNAc...) asparagine glycans are attached at residues N1154 and N1155. EGF-like domains lie at 1183–1222 and 1223–1262; these read DQCS…HTCQ and IQSY…ESCR. Residues N1195 and N1218 are each glycosylated (N-linked (GlcNAc...) asparagine). LDL-receptor class B repeat units follow at residues 1309 to 1355, 1356 to 1398, 1399 to 1445, 1446 to 1490, and 1491 to 1531; these read SALY…DWIA, GNIY…DPRD, GILF…DYLE, KRIL…YGGE, and VYWT…YHPS. Residue N1511 is glycosylated (N-linked (GlcNAc...) (complex) asparagine). In terms of domain architecture, EGF-like 7 spans 1536-1579; that stretch reads APNPCEANGGQGPCSHLCLINYNRTVSCACPHLMKLHKDNTTCY. 3 disulfides stabilise this stretch: C1540/C1553, C1549/C1563, and C1565/C1578. N-linked (GlcNAc...) asparagine glycosylation is found at N1558, N1575, N1616, and N1645. 4 LDL-receptor class B repeats span residues 1627 to 1669, 1670 to 1713, 1714 to 1753, and 1754 to 1798; these read QRVY…DWVS, RNLF…HPLR, GKLY…DFPE, and SKLY…MGDK. 4 N-linked (GlcNAc...) asparagine glycosylation sites follow: N1723, N1733, N1763, and N1825. The EGF-like 8 domain maps to 1846–1887; it reads GTNPCSVNNGDCSQLCLPTSETTRSCMCTAGYSLRSGQQACE. 3 disulfides stabilise this stretch: C1850–C1861, C1857–C1871, and C1873–C1886. N1933 carries an N-linked (GlcNAc...) asparagine glycan. LDL-receptor class B repeat units follow at residues 1934–1976, 1977–2019, 2020–2063, and 2064–2107; these read DTIY…DWIA, GNIY…HPEK, GYLF…DYQD, and GKLY…FEDF. N-linked (GlcNAc...) asparagine glycosylation is present at N1995. The residue at position 2009 (K2009) is an N6-acetyllysine. An N-linked (GlcNAc...) asparagine glycan is attached at N2048. N-linked (GlcNAc...) asparagine glycosylation is found at N2117 and N2127. The region spanning 2155 to 2195 is the EGF-like 9 domain; the sequence is GTNVCAVANGGCQQLCLYRGRGQRACACAHGMLAEDGASCR. 3 cysteine pairs are disulfide-bonded: C2159–C2170, C2166–C2180, and C2182–C2194. LDL-receptor class B repeat units follow at residues 2253–2294, 2295–2343, 2344–2388, 2389–2431, and 2432–2473; these read NRIF…HRGW, DTLY…DECQ, NLMF…DHRA, EKLY…YGEH, and IFWT…VAND. An N-linked (GlcNAc...) asparagine glycan is attached at N2472. In terms of domain architecture, EGF-like 10 spans 2478 to 2518; that stretch reads ELSPCRINNGGCQDLCLLTHQGHVNCSCRGGRILQDDLTCR. 3 cysteine pairs are disulfide-bonded: C2482/C2493, C2489/C2503, and C2505/C2517. The N-linked (GlcNAc...) asparagine glycan is linked to N2502. N2521 carries N-linked (GlcNAc...) asparagine glycosylation. LDL-receptor class A domains lie at 2522–2563, 2564–2602, 2603–2641, 2642–2690, 2694–2732, 2732–2771, and 2772–2814; these read SSCR…YCNS, RRCK…PCNK, TACG…NCSA, TDCS…DCPG, PRCP…HCNK, KFCS…HCEG, and KTCG…GCLY. 6 cysteine pairs are disulfide-bonded: C2524–C2537, C2532–C2550, C2544–C2561, C2566–C2578, C2573–C2591, and C2585–C2600. An N-linked (GlcNAc...) asparagine glycan is attached at N2539. Residue N2601 is glycosylated (N-linked (GlcNAc...) asparagine). Cystine bridges form between C2605-C2617, C2612-C2630, C2624-C2639, C2644-C2666, C2660-C2679, C2673-C2688, C2696-C2708, C2703-C2721, C2715-C2730, C2734-C2746, C2741-C2759, C2753-C2769, C2774-C2787, C2781-C2800, and C2794-C2812. N-linked (GlcNAc...) asparagine glycans are attached at residues N2620 and N2638. N2815 carries an N-linked (GlcNAc...) asparagine glycan. LDL-receptor class A domains are found at residues 2816 to 2855, 2856 to 2899, and 2902 to 2940; these read STCD…ECEY, PTCG…HCTS, and HKCN…RGCH. 15 disulfide bridges follow: C2818/C2830, C2825/C2843, C2837/C2853, C2858/C2870, C2865/C2884, C2878/C2897, C2904/C2917, C2912/C2930, C2924/C2939, C2944/C2956, C2952/C2965, C2967/C2980, C2986/C2996, C2992/C3005, and C3007/C3021. Residue N2905 is glycosylated (N-linked (GlcNAc...) asparagine). The EGF-like 11 domain maps to 2941 to 2981; it reads INECLSRKLSGCSQDCEDLKIGFKCRCRPGFRLKDDGRTCA. The region spanning 2982 to 3022 is the EGF-like 12; calcium-binding domain; that stretch reads DVDECSTTFPCSQRCINTHGSYKCLCVEGYAPRGGDPHSCK. N3048 and N3089 each carry an N-linked (GlcNAc...) asparagine glycan. LDL-receptor class B repeat units lie at residues 3069–3113, 3114–3156, 3157–3200, 3201–3243, and 3244–3284; these read QMIY…DWVG, GNLY…DVQN, GYLY…DYVT, ERIY…FEDY, and VYWT…FHAL. N3264 carries N-linked (GlcNAc...) asparagine glycosylation. One can recognise an EGF-like 13 domain in the interval 3290-3331; that stretch reads PNHPCKVNNGGCSNLCLLSPGGGHKCACPTNFYLGSDGRTCV. Disulfide bonds link C3294–C3305, C3301–C3315, and C3317–C3330. LDL-receptor class A domains are found at residues 3332-3371, 3372-3410, 3411-3450, 3451-3491, 3492-3533, 3534-3572, 3573-3611, 3611-3649, 3652-3692, 3693-3733, and 3739-3778; these read SNCT…DCPE, FKCR…NCDI, HVCL…DCPE, VTCA…NCTQ, MTCG…ECDE, RTCE…SCTP, RPCS…DCTP, PRCD…ACGT, RTCP…ECAR, FVCP…DCEP, and THCK…DCSI. Residue N3333 is glycosylated (N-linked (GlcNAc...) asparagine). Cystine bridges form between C3334-C3346, C3341-C3359, C3353-C3369, C3374-C3386, C3381-C3399, C3393-C3408, C3413-C3426, C3420-C3439, C3433-C3448, C3453-C3466, C3460-C3479, C3473-C3489, C3494-C3507, C3501-C3520, C3514-C3531, C3536-C3548, C3543-C3561, C3555-C3570, C3575-C3587, C3582-C3600, C3594-C3609, C3613-C3625, C3620-C3638, C3632-C3647, C3654-C3666, C3661-C3679, C3673-C3690, C3695-C3709, C3703-C3722, C3716-C3731, C3741-C3754, C3749-C3767, C3761-C3776, C3785-C3798, C3792-C3807, C3809-C3822, C3828-C3838, C3834-C3847, and C3849-C3860. A glycan (N-linked (GlcNAc...) asparagine) is linked at N3488. N-linked (GlcNAc...) asparagine glycosylation is present at N3662. EGF-like domains lie at 3781–3823 and 3824–3861; these read KLTS…PGCQ and DINE…NTCK. The N-linked (GlcNAc...) asparagine glycan is linked to N3788. N3839 carries an N-linked (GlcNAc...) asparagine glycan. LDL-receptor class B repeat units lie at residues 3912–3954, 3970–4012, 4013–4056, and 4057–4101; these read GRVY…HLNI, GNVY…DPLR, GTMY…DYHN, and ERLY…FEDY. The Recognition site for proteolytical processing motif lies at 3940–3943; that stretch reads RHRR. N3953 carries N-linked (GlcNAc...) asparagine glycosylation. N-linked (GlcNAc...) asparagine glycans are attached at residues N4075 and N4125. 7 EGF-like domains span residues 4147–4183, 4196–4232, 4232–4268, 4268–4304, 4304–4340, 4340–4375, and 4373–4409; these read VTNP…GTCV, RPGT…DKCE, ELDQ…PKCT, TQQV…DRCQ, QYRQ…SRCE, EVNK…PSCL, and SCLT…PRCE. Intrachain disulfides connect C4151–C4160, C4156–C4169, C4171–C4182, C4200–C4210, C4204–C4220, C4222–C4231, C4236–C4246, C4240–C4256, C4258–C4267, C4272–C4282, C4276–C4292, C4294–C4303, C4308–C4318, C4312–C4328, C4330–C4339, C4344–C4352, and C4347–C4363. The N-linked (GlcNAc...) asparagine glycan is linked to N4179. 2 N-linked (GlcNAc...) asparagine glycosylation sites follow: N4278 and N4279. An N-linked (GlcNAc...) asparagine glycan is attached at N4364. 4 disulfide bridges follow: C4365/C4374, C4377/C4387, C4381/C4397, and C4399/C4408. Residues 4420 to 4444 traverse the membrane as a helical segment; that stretch reads HIASILIPLLLLLLLVLVAGVVFWY. Over 4445–4544 the chain is Cytoplasmic; that stretch reads KRRVQGAKGF…PEDEIGDPLA (100 aa). Residues 4445–4544 form an interaction with MAFB region; the sequence is KRRVQGAKGF…PEDEIGDPLA (100 aa). Position 4460 is a phosphothreonine (T4460). The NPXY motif signature appears at 4502–4507; that stretch reads FTNPVY. The residue at position 4507 (Y4507) is a Phosphotyrosine. 3 positions are modified to phosphoserine: S4517, S4520, and S4523.

The protein belongs to the LDLR family. As to quaternary structure, heterodimer of an 85-kDa membrane-bound carboxyl subunit and a non-covalently attached 515-kDa N-terminal subunit. Intracellular domain interacts with MAFB. Found in a complex with PID1/PCLI1, LRP1 and CUBNI. Interacts with SNX17, PID1/PCLI1, PDGF and CUBN. The intracellular domain interacts with SHC1, GULP1 and DAB1. Can weakly interact (via NPXY motif) with DAB2 (via PID domain); the interaction is enhanced by tyrosine phosphorylation of the NPXY motif. Interacts with MDK; promotes neuronal survival. Interacts with LRPAP1; this interaction is followed by rapid internalization. Interacts with uPA/PLAU and PAI1/SERPINE1, either individually or in complex with each other, leading to rapid endocytosis; this interaction is abolished in the presence of LRPAP1/RAP. Also interacts with tPA/PLAT alone or in complex with SERPINE1. Interacts with the urokinase receptor PLAUR; this interaction leads to PLAUR internalization and is impaired in the presence of SORL1. Interacts with PDGFB. Interacts with TAU/MAPT, leading to endocytosis; this interaction is reduced in the presence of LRPAP1/RAP. Interacts with IGFBP3; this interaction mediates cell growth inhibition independently of IGF1. Interacts with ADGRG6. (Microbial infection) Interacts with bacterial exotoxins. In terms of assembly, (Microbial infection) Interacts with Rift valley fever virus (RVFV) glycoprotein N; this interaction facilitates virus entry. Post-translationally, cleaved into a 85 kDa membrane-spanning subunit (LRP-85) and a 515 kDa large extracellular domain (LRP-515) that remains non-covalently associated. Gamma-secretase-dependent cleavage of LRP-85 releases the intracellular domain from the membrane. In terms of processing, the N-terminus is blocked. Phosphorylated on serine and threonine residues. Post-translationally, phosphorylated on tyrosine residues upon stimulation with PDGF. Tyrosine phosphorylation promotes interaction with SHC1. Most abundant in liver, brain and lung.

Its subcellular location is the cell membrane. The protein resides in the membrane. It is found in the coated pit. It localises to the cytoplasm. The protein localises to the nucleus. Its subcellular location is the golgi outpost. The protein resides in the cytoskeleton. It is found in the microtubule organizing center. Its function is as follows. Endocytic receptor involved in endocytosis and in phagocytosis of apoptotic cells. Required for early embryonic development. Involved in cellular lipid homeostasis. Involved in the plasma clearance of chylomicron remnants and activated LRPAP1 (alpha 2-macroglobulin), as well as the local metabolism of complexes between plasminogen activators and their endogenous inhibitors. Acts as an LRPAP1 alpha-2-macroglobulin receptor. Acts as TAU/MAPT receptor and controls the endocytosis of TAU/MAPT as well as its subsequent spread. May modulate cellular events, such as APP metabolism, kinase-dependent intracellular signaling, neuronal calcium signaling as well as neurotransmission. Also acts as a receptor for IGFBP3 to mediate cell growth inhibition. Functionally, (Microbial infection) Functions as a receptor for Pseudomonas aeruginosa exotoxin A. The polypeptide is Prolow-density lipoprotein receptor-related protein 1 (Homo sapiens (Human)).